The primary structure comprises 747 residues: DNA repair and recombination protein RAD54-like (747 aa).

The disordered stretch occupies residues 1–42 (MRRSLAPSQLARRKPEDRSSDDEDWQPGTVTPKKRKSSSETQ). Residues 2–9 (RRSLAPSQ) form a required for chromatin remodeling, strand pairing activities and coupling of ATPase activity region. Position 38 is a phosphoserine (Ser38). Residues 170–345 (SRRIPGSHGC…FSLVHFVNSG (176 aa)) form the Helicase ATP-binding domain. 183-190 (DEMGLGKT) is an ATP binding site. The short motif at 296–299 (DEGH) is the DEGH box element. Positions 500-653 (VLDYILAVTR…CVVDEEQDVE (154 aa)) constitute a Helicase C-terminal domain. At Lys515 the chain carries N6-acetyllysine. Position 572 is a phosphoserine; by NEK1 (Ser572).

This sequence belongs to the SNF2/RAD54 helicase family. In terms of assembly, homohexamer. Interacts (via N-terminus) with RAD51. Interacts with NAP1L1. Interacts with BRD9; this interaction orchestrates RAD51-RAD54 complex formation. In terms of processing, acetylated. Acetylation promotes interaction with BRD9, and subsequently with RAD54, which is essential for homologous recombination (HR). Phosphorylated. Phosphorylation at Ser-572 by NEK1 specifically in G2 phase allows efficient removal of RAD51 filaments from DNA. In terms of tissue distribution, hardly detectable in most tissues. Dramatically increased in thymus, spleen and testis.

The protein resides in the nucleus. The catalysed reaction is ATP + H2O = ADP + phosphate + H(+). Plays an essential role in homologous recombination (HR) which is a major pathway for repairing DNA double-strand breaks (DSBs), single-stranded DNA (ssDNA) gaps, and stalled or collapsed replication forks. Acts as a molecular motor during the homology search and guides RAD51 ssDNA along a donor dsDNA thereby changing the homology search from the diffusion-based mechanism to a motor-guided mechanism. Plays also an essential role in RAD51-mediated synaptic complex formation which consists of three strands encased in a protein filament formed once homology is recognized. Once DNA strand exchange occured, dissociates RAD51 from nucleoprotein filaments formed on dsDNA. Deficiency also resulted in an increased frequency of end-to-end chromosome fusions involving telomeres compared to the controls, suggesting a putative role in telomere capping. Non-homologous end joining (NHEJ) and homologous recombination (HR) represent the two major pathways of DNA double-strand break (DSB) repair in eukaryotic cells. LIG4 and RAD54L cooperate to support cellular proliferation, repair spontaneous DSBs, and prevent chromosome and single chromatid aberrations. This chain is DNA repair and recombination protein RAD54-like (Rad54l), found in Mus musculus (Mouse).